Reading from the N-terminus, the 520-residue chain is Ribonuclease Y (520 aa).

A helical transmembrane segment spans residues 4–24; the sequence is TVWILISILLATVGAVVGFFV. In terms of domain architecture, KH spans 210 to 273; it reads TVSVVNLPND…ETARIALDKL (64 aa). Residues 336–429 enclose the HD domain; it reads VLKHSMEVAY…VAAADALSAA (94 aa).

It belongs to the RNase Y family.

The protein resides in the cell membrane. In terms of biological role, endoribonuclease that initiates mRNA decay. The polypeptide is Ribonuclease Y (Bacillus cereus (strain ZK / E33L)).